Reading from the N-terminus, the 1295-residue chain is DNA-directed RNA polymerase subunit beta' (1295 aa).

Zn(2+) contacts are provided by cysteine 66, cysteine 68, cysteine 81, and cysteine 84. Mg(2+) is bound by residues aspartate 562, aspartate 564, and aspartate 566. Residues cysteine 901, cysteine 975, cysteine 982, and cysteine 985 each contribute to the Zn(2+) site.

The protein belongs to the RNA polymerase beta' chain family. The RNAP catalytic core consists of 2 alpha, 1 beta, 1 beta' and 1 omega subunit. When a sigma factor is associated with the core the holoenzyme is formed, which can initiate transcription. Mg(2+) is required as a cofactor. Requires Zn(2+) as cofactor.

It carries out the reaction RNA(n) + a ribonucleoside 5'-triphosphate = RNA(n+1) + diphosphate. DNA-dependent RNA polymerase catalyzes the transcription of DNA into RNA using the four ribonucleoside triphosphates as substrates. This chain is DNA-directed RNA polymerase subunit beta', found in Rubrobacter xylanophilus (strain DSM 9941 / JCM 11954 / NBRC 16129 / PRD-1).